A 407-amino-acid chain; its full sequence is Tyrosine--tRNA ligase (407 aa).

L-tyrosine is bound at residue Y35. The 'HIGH' region motif lies at 40–49 (PTADSLHVGH). L-tyrosine-binding residues include Y168 and Q172. The short motif at 228–232 (KMGKT) is the 'KMSKS' region element. Residue K231 participates in ATP binding. Positions 341-405 (NLLVDLLVKC…RGKKNFNRIV (65 aa)) constitute an S4 RNA-binding domain.

This sequence belongs to the class-I aminoacyl-tRNA synthetase family. TyrS type 1 subfamily. Homodimer.

The protein resides in the cytoplasm. The catalysed reaction is tRNA(Tyr) + L-tyrosine + ATP = L-tyrosyl-tRNA(Tyr) + AMP + diphosphate + H(+). In terms of biological role, catalyzes the attachment of tyrosine to tRNA(Tyr) in a two-step reaction: tyrosine is first activated by ATP to form Tyr-AMP and then transferred to the acceptor end of tRNA(Tyr). The sequence is that of Tyrosine--tRNA ligase from Clostridium botulinum (strain Kyoto / Type A2).